The chain runs to 1553 residues: DNA topoisomerase 2-alpha (1553 aa).

The tract at residues 1–25 (MELLDSPAPLRPLHDNPRLPKADGA) is disordered. Residues 12–25 (PLHDNPRLPKADGA) are compositionally biased toward basic and acidic residues. Residues N92, N121, 149-151 (SSN), and 162-169 (GRNGYGAK) contribute to the ATP site. The tract at residues 343–345 (KKK) is interaction with DNA. 377-379 (QTK) provides a ligand contact to ATP. A Toprim domain is found at 456–573 (CTLILTEGDS…SLLRHNFLEE (118 aa)). Mg(2+) is bound by residues E462, D542, and D544. The Topo IIA-type catalytic domain maps to 716–1163 (IPSLVDGLKP…SPSDLWKEDL (448 aa)). Catalysis depends on Y806, which acts as the O-(5'-phospho-DNA)-tyrosine intermediate. Residues 991 to 1000 (KLQTNLTCNS) form an interaction with DNA region. Disordered regions lie at residues 1095–1114 (QNKEEEEGDESGEESAAATG) and 1186–1553 (TGKP…DDMF). Residues 1098 to 1107 (EEEEGDESGE) are compositionally biased toward acidic residues. Positions 1242–1262 (SEKNESDEKQEGNSSGDKEPS) are enriched in basic and acidic residues. Acidic residues-rich tracts occupy residues 1300–1310 (SESDSESDDFE) and 1334–1349 (SDADLTSSDEDSEYQE). The segment covering 1371–1385 (VPKEKKGKAPKEKPL) has biased composition (basic and acidic residues). Low complexity predominate over residues 1413 to 1432 (PRAQAVPKKPAAAKKGSTAK). A compositionally biased stretch (basic residues) spans 1444–1454 (KKKAAPKAPRR). Positions 1517–1532 (SIDLTADSPAAAAPRT) are enriched in low complexity.

This sequence belongs to the type II topoisomerase family. As to quaternary structure, homodimer. Requires Mg(2+) as cofactor. Mn(2+) is required as a cofactor. The cofactor is Ca(2+).

It is found in the cytoplasm. The protein resides in the nucleus. It localises to the nucleoplasm. Its subcellular location is the nucleolus. It catalyses the reaction ATP-dependent breakage, passage and rejoining of double-stranded DNA.. In terms of biological role, key decatenating enzyme that alters DNA topology by binding to two double-stranded DNA molecules, generating a double-stranded break in one of the strands, passing the intact strand through the broken strand, and religating the broken strand. May play a role in the regulation of circadian rhythm. In Gallus gallus (Chicken), this protein is DNA topoisomerase 2-alpha (TOP2A).